We begin with the raw amino-acid sequence, 1140 residues long: Centrosomal protein of 135 kDa (1140 aa).

The tract at residues 11-64 is homodimerization; the sequence is NIRKRLDQLGYRQTLTVECLPLVEKLFSDLVHTTESLRQSKLSAVKAEKESANF. Coiled-coil stretches lie at residues 75-151 and 199-416; these read NARL…KNLH and LQVA…FAVT. 2 positions are modified to phosphoserine: Ser-383 and Ser-439. 3 coiled-coil regions span residues 447–644, 668–1036, and 1079–1113; these read LKGI…LENK, SLRI…LESL, and NTML…AIQE. Position 688 is a phosphoserine (Ser-688). The interval 1114 to 1140 is disordered; it reads MRRHGLATPPLSSTLRSPSHSPEHRNV. At Thr-1121 the chain carries Phosphothreonine. A compositionally biased stretch (low complexity) spans 1121–1133; the sequence is TPPLSSTLRSPSH. Ser-1130 is modified (phosphoserine).

The protein belongs to the CEP135/TSGA10 family. As to quaternary structure, homodimer. Interacts with DCTN2. Interacts with CEP250.

The protein resides in the cytoplasm. Its subcellular location is the cytoskeleton. The protein localises to the microtubule organizing center. It localises to the centrosome. It is found in the centriole. In terms of biological role, centrosomal microtubule-binding protein involved in centriole biogenesis. Acts as a scaffolding protein during early centriole biogenesis. Required for the targeting of centriole satellite proteins to centrosomes such as of PCM1, SSX2IP and CEP290 and recruitment of WRAP73 to centrioles. Also required for centriole-centriole cohesion during interphase by acting as a platform protein for CEP250 at the centriole. Required for the recruitment of CEP295 to the proximal end of new-born centrioles at the centriolar microtubule wall during early S phase in a PLK4-dependent manner. The chain is Centrosomal protein of 135 kDa from Homo sapiens (Human).